A 394-amino-acid chain; its full sequence is ORC1-type DNA replication protein 3 (394 aa).

ATP is bound by residues 66–70 (TGKTF) and tyrosine 207.

Belongs to the CDC6/cdc18 family. In terms of assembly, monomer. Interacts with Cdc6-1, Cdc6-2, MCM and PolB1.

Involved in regulation of DNA replication. May play essential roles in origin recognition and cell cycle control of replication. Binds to DNA, with a preference for molecules that contain a bubble, a fork, or a tail. Inhibits the binding of the MCM helicase to the origin DNA and inhibits its DNA helicase activity. Also regulates the DNA polymerase and the nuclease activities of PolB1. Inhibits the DNA-binding activity of Cdc6-1 and Cdc6-2. The sequence is that of ORC1-type DNA replication protein 3 (cdc6-3) from Saccharolobus solfataricus (strain ATCC 35092 / DSM 1617 / JCM 11322 / P2) (Sulfolobus solfataricus).